Here is a 1202-residue protein sequence, read N- to C-terminus: Adenine-specific methyltransferase PglX (1202 aa).

Belongs to the methyltransferase superfamily. PglX adenine methyltransferase family.

It catalyses the reaction a 2'-deoxyadenosine in DNA + S-adenosyl-L-methionine = an N(6)-methyl-2'-deoxyadenosine in DNA + S-adenosyl-L-homocysteine + H(+). Its function is as follows. BREX systems (bacteriophage exclusion) provide immunity against bacteriophage. Part of a type 1 BREX system which protects against dsDNA phage. This system allows phage adsorption but prevents phage DNA replication, without degradation of the phage DNA. Methylation of bacterial DNA by this protein guides self/non-self discrimination. In terms of biological role, probably methylates the adenine in the fifth position of the hexamer 5'-ACRCAG-3' in genomic DNA. N(6)-methylated adenine on the fifth position of 5'-ACRCAG-3' is found in the genome; there are 1906 sites in the genomic DNA. This Lacticaseibacillus casei (strain Zhang) (Lactobacillus casei) protein is Adenine-specific methyltransferase PglX.